The following is a 185-amino-acid chain: Acireductone dioxygenase (185 aa).

His97, His99, Glu103, and His141 together coordinate Fe(2+). His97, His99, Glu103, and His141 together coordinate Ni(2+).

Belongs to the acireductone dioxygenase (ARD) family. As to quaternary structure, monomer. The cofactor is Fe(2+). Requires Ni(2+) as cofactor.

The enzyme catalyses 1,2-dihydroxy-5-(methylsulfanyl)pent-1-en-3-one + O2 = 3-(methylsulfanyl)propanoate + CO + formate + 2 H(+). It catalyses the reaction 1,2-dihydroxy-5-(methylsulfanyl)pent-1-en-3-one + O2 = 4-methylsulfanyl-2-oxobutanoate + formate + 2 H(+). The protein operates within amino-acid biosynthesis; L-methionine biosynthesis via salvage pathway; L-methionine from S-methyl-5-thio-alpha-D-ribose 1-phosphate: step 5/6. In terms of biological role, catalyzes 2 different reactions between oxygen and the acireductone 1,2-dihydroxy-3-keto-5-methylthiopentene (DHK-MTPene) depending upon the metal bound in the active site. Fe-containing acireductone dioxygenase (Fe-ARD) produces formate and 2-keto-4-methylthiobutyrate (KMTB), the alpha-ketoacid precursor of methionine in the methionine recycle pathway. Ni-containing acireductone dioxygenase (Ni-ARD) produces methylthiopropionate, carbon monoxide and formate, and does not lie on the methionine recycle pathway. The protein is Acireductone dioxygenase of Stenotrophomonas maltophilia (strain K279a).